A 510-amino-acid polypeptide reads, in one-letter code: Cytochrome P450 705A20 (510 aa).

A helical membrane pass occupies residues 7–27 (QHCFSFILLCFFSLLCYSLLF).

It belongs to the cytochrome P450 family. It depends on heme as a cofactor.

Its subcellular location is the membrane. In Arabidopsis thaliana (Mouse-ear cress), this protein is Cytochrome P450 705A20 (CYP705A20).